Here is a 347-residue protein sequence, read N- to C-terminus: HTH-type transcriptional regulator PhcA (347 aa).

Residues 1–61 (MVNVDTKLLV…IRVPHGLTPT (61 aa)) enclose the HTH lysR-type domain. The H-T-H motif DNA-binding region spans 21 to 40 (ATYVAEKMHMTAPAVSHSLG). The segment at 316–347 (PMHPPMLTDDSGKSGKTGKGDAEKEDESRLSV) is disordered. Basic and acidic residues predominate over residues 325 to 347 (DSGKSGKTGKGDAEKEDESRLSV).

The protein belongs to the LysR transcriptional regulatory family.

Functionally, regulates the transcription of one or more of the genes involved in virulence. In Ralstonia nicotianae (strain ATCC BAA-1114 / GMI1000) (Ralstonia solanacearum), this protein is HTH-type transcriptional regulator PhcA (phcA).